The chain runs to 1396 residues: DNA-directed RNA polymerase subunit beta (1396 aa).

It belongs to the RNA polymerase beta chain family. As to quaternary structure, the RNAP catalytic core consists of 2 alpha, 1 beta, 1 beta' and 1 omega subunit. When a sigma factor is associated with the core the holoenzyme is formed, which can initiate transcription.

The enzyme catalyses RNA(n) + a ribonucleoside 5'-triphosphate = RNA(n+1) + diphosphate. Functionally, DNA-dependent RNA polymerase catalyzes the transcription of DNA into RNA using the four ribonucleoside triphosphates as substrates. This chain is DNA-directed RNA polymerase subunit beta, found in Erythrobacter litoralis (strain HTCC2594).